The chain runs to 299 residues: Non-structural protein V (299 aa).

Disordered stretches follow at residues 56-79 (DHQDISKPCFPAAGPGKSSMSRCH), 137-186 (DGVE…ETVE), and 205-229 (KAGKTLVVPPIPSQERPTASEKPIK). The segment covering 137-160 (DGVEVWGGDEESENSDVDSGEPDP) has biased composition (acidic residues). H232, C251, C255, C267, C269, C272, C276, and C279 together coordinate Zn(2+).

This sequence belongs to the paramyxoviruses V protein family. In terms of assembly, interacts with host IFIH1/MDA5 and DHX58/LGP2. Interacts with host TYK2; this interaction inhibits the type I interferon signaling pathway.

Its subcellular location is the host cytoplasm. Functionally, plays an essential role in the inhibition of host immune response. Prevents the establishment of cellular antiviral state by blocking interferon-alpha/beta (IFN-alpha/beta) production and signaling pathway. Interacts with host IFIH1/MDA5 and DHX58/LGP2 to inhibit the transduction pathway involved in the activation of IFN-beta promoter, thus protecting the virus against cell antiviral state. Blocks the type I interferon signaling pathway by interacting with host TYK2 and thereby inhibiting downstream STAT1 and STAT2 phosphorylation. This Bos indicus (Zebu) protein is Non-structural protein V (P/V).